Consider the following 277-residue polypeptide: Thymidylate synthase (277 aa).

Arg-27 serves as a coordination point for dUMP. Position 57 (His-57) interacts with (6R)-5,10-methylene-5,6,7,8-tetrahydrofolate. 132-133 (RR) is a dUMP binding site. Cys-152 (nucleophile) is an active-site residue. Residues 179–182 (RSAD), Asn-190, and 220–222 (HIY) contribute to the dUMP site. A (6R)-5,10-methylene-5,6,7,8-tetrahydrofolate-binding site is contributed by Asp-182. Ala-276 provides a ligand contact to (6R)-5,10-methylene-5,6,7,8-tetrahydrofolate.

This sequence belongs to the thymidylate synthase family. Bacterial-type ThyA subfamily. As to quaternary structure, homodimer.

The protein resides in the cytoplasm. The catalysed reaction is dUMP + (6R)-5,10-methylene-5,6,7,8-tetrahydrofolate = 7,8-dihydrofolate + dTMP. The protein operates within pyrimidine metabolism; dTTP biosynthesis. Functionally, catalyzes the reductive methylation of 2'-deoxyuridine-5'-monophosphate (dUMP) to 2'-deoxythymidine-5'-monophosphate (dTMP) while utilizing 5,10-methylenetetrahydrofolate (mTHF) as the methyl donor and reductant in the reaction, yielding dihydrofolate (DHF) as a by-product. This enzymatic reaction provides an intracellular de novo source of dTMP, an essential precursor for DNA biosynthesis. This Acidovorax sp. (strain JS42) protein is Thymidylate synthase.